The primary structure comprises 451 residues: 3-carboxy-cis,cis-muconate cycloisomerase (451 aa).

Belongs to the class-II fumarase/aspartase family.

The catalysed reaction is 2-(carboxymethyl)-5-oxo-2,5-dihydro-2-furoate = 3-carboxy-cis,cis-muconate + H(+). Functionally, catalyzes an anti cycloisomerization. In Bradyrhizobium diazoefficiens (strain JCM 10833 / BCRC 13528 / IAM 13628 / NBRC 14792 / USDA 110), this protein is 3-carboxy-cis,cis-muconate cycloisomerase (pcaB).